Reading from the N-terminus, the 377-residue chain is Chaperone protein DnaJ (377 aa).

In terms of domain architecture, J spans 5–70 (DYYEVLGVGR…NKKAAYDQFG (66 aa)). The CR-type zinc-finger motif lies at 133-211 (GLTKELRIPT…CHGDGRVEKT (79 aa)). Residues C146, C149, C163, C166, C185, C188, C199, and C202 each coordinate Zn(2+). 4 CXXCXGXG motif repeats span residues 146–153 (CDVCDGSG), 163–170 (CGTCHGQG), 185–192 (CPTCHGRG), and 199–206 (CSKCHGDG).

The protein belongs to the DnaJ family. As to quaternary structure, homodimer. Zn(2+) serves as cofactor.

Its subcellular location is the cytoplasm. In terms of biological role, participates actively in the response to hyperosmotic and heat shock by preventing the aggregation of stress-denatured proteins and by disaggregating proteins, also in an autonomous, DnaK-independent fashion. Unfolded proteins bind initially to DnaJ; upon interaction with the DnaJ-bound protein, DnaK hydrolyzes its bound ATP, resulting in the formation of a stable complex. GrpE releases ADP from DnaK; ATP binding to DnaK triggers the release of the substrate protein, thus completing the reaction cycle. Several rounds of ATP-dependent interactions between DnaJ, DnaK and GrpE are required for fully efficient folding. Also involved, together with DnaK and GrpE, in the DNA replication of plasmids through activation of initiation proteins. This is Chaperone protein DnaJ from Shewanella sp. (strain ANA-3).